Consider the following 238-residue polypeptide: Ribonuclease PH (238 aa).

Phosphate-binding positions include Arg86 and 124 to 126; that span reads GTR.

Belongs to the RNase PH family. In terms of assembly, homohexameric ring arranged as a trimer of dimers.

The enzyme catalyses tRNA(n+1) + phosphate = tRNA(n) + a ribonucleoside 5'-diphosphate. Functionally, phosphorolytic 3'-5' exoribonuclease that plays an important role in tRNA 3'-end maturation. Removes nucleotide residues following the 3'-CCA terminus of tRNAs; can also add nucleotides to the ends of RNA molecules by using nucleoside diphosphates as substrates, but this may not be physiologically important. Probably plays a role in initiation of 16S rRNA degradation (leading to ribosome degradation) during starvation. This chain is Ribonuclease PH, found in Acinetobacter baylyi (strain ATCC 33305 / BD413 / ADP1).